Here is a 407-residue protein sequence, read N- to C-terminus: Proteasome-activating nucleotidase (407 aa).

Residues 22 to 67 are a coiled coil; the sequence is KEKAYLAELESKVLRLELKNKDITRENVQIKKENEILKRELDKLRI. ATP contacts are provided by residues 192-197 and His-331; that span reads GTGKTL. The tract at residues 405-407 is docks into pockets in the proteasome alpha-ring to cause gate opening; it reads MYG.

The protein belongs to the AAA ATPase family. In terms of assembly, homohexamer. The hexameric complex has a two-ring architecture resembling a top hat that caps the 20S proteasome core at one or both ends. Upon ATP-binding, the C-terminus of PAN interacts with the alpha-rings of the proteasome core by binding to the intersubunit pockets.

It localises to the cytoplasm. ATPase which is responsible for recognizing, binding, unfolding and translocation of substrate proteins into the archaeal 20S proteasome core particle. Is essential for opening the gate of the 20S proteasome via an interaction with its C-terminus, thereby allowing substrate entry and access to the site of proteolysis. Thus, the C-termini of the proteasomal ATPase function like a 'key in a lock' to induce gate opening and therefore regulate proteolysis. Unfolding activity requires energy from ATP hydrolysis, whereas ATP binding alone promotes ATPase-20S proteasome association which triggers gate opening, and supports translocation of unfolded substrates. The sequence is that of Proteasome-activating nucleotidase from Methanococcus vannielii (strain ATCC 35089 / DSM 1224 / JCM 13029 / OCM 148 / SB).